The primary structure comprises 323 residues: 4-hydroxy-3-methylbut-2-enyl diphosphate reductase (323 aa).

[4Fe-4S] cluster is bound at residue Cys21. Residues His50 and His83 each contribute to the (2E)-4-hydroxy-3-methylbut-2-enyl diphosphate site. Dimethylallyl diphosphate contacts are provided by His50 and His83. 2 residues coordinate isopentenyl diphosphate: His50 and His83. Position 105 (Cys105) interacts with [4Fe-4S] cluster. His133 provides a ligand contact to (2E)-4-hydroxy-3-methylbut-2-enyl diphosphate. His133 is a dimethylallyl diphosphate binding site. Residue His133 coordinates isopentenyl diphosphate. Glu135 functions as the Proton donor in the catalytic mechanism. Thr173 contributes to the (2E)-4-hydroxy-3-methylbut-2-enyl diphosphate binding site. Position 203 (Cys203) interacts with [4Fe-4S] cluster. Residues Ser231, Ser232, Asn233, and Ser276 each contribute to the (2E)-4-hydroxy-3-methylbut-2-enyl diphosphate site. Residues Ser231, Ser232, Asn233, and Ser276 each coordinate dimethylallyl diphosphate. Residues Ser231, Ser232, Asn233, and Ser276 each coordinate isopentenyl diphosphate.

This sequence belongs to the IspH family. Requires [4Fe-4S] cluster as cofactor.

It carries out the reaction isopentenyl diphosphate + 2 oxidized [2Fe-2S]-[ferredoxin] + H2O = (2E)-4-hydroxy-3-methylbut-2-enyl diphosphate + 2 reduced [2Fe-2S]-[ferredoxin] + 2 H(+). It catalyses the reaction dimethylallyl diphosphate + 2 oxidized [2Fe-2S]-[ferredoxin] + H2O = (2E)-4-hydroxy-3-methylbut-2-enyl diphosphate + 2 reduced [2Fe-2S]-[ferredoxin] + 2 H(+). Its pathway is isoprenoid biosynthesis; dimethylallyl diphosphate biosynthesis; dimethylallyl diphosphate from (2E)-4-hydroxy-3-methylbutenyl diphosphate: step 1/1. The protein operates within isoprenoid biosynthesis; isopentenyl diphosphate biosynthesis via DXP pathway; isopentenyl diphosphate from 1-deoxy-D-xylulose 5-phosphate: step 6/6. In terms of biological role, catalyzes the conversion of 1-hydroxy-2-methyl-2-(E)-butenyl 4-diphosphate (HMBPP) into a mixture of isopentenyl diphosphate (IPP) and dimethylallyl diphosphate (DMAPP). Acts in the terminal step of the DOXP/MEP pathway for isoprenoid precursor biosynthesis. This Cutibacterium acnes (strain DSM 16379 / KPA171202) (Propionibacterium acnes) protein is 4-hydroxy-3-methylbut-2-enyl diphosphate reductase.